We begin with the raw amino-acid sequence, 488 residues long: Malonate-semialdehyde dehydrogenase 1 (488 aa).

Residues phenylalanine 156, lysine 180, glutamate 183, arginine 184, serine 233, and serine 255 each coordinate NAD(+). Cysteine 288 serves as the catalytic Nucleophile. An NAD(+)-binding site is contributed by glutamate 387.

The protein belongs to the aldehyde dehydrogenase family. IolA subfamily. In terms of assembly, homotetramer.

It catalyses the reaction 3-oxopropanoate + NAD(+) + CoA + H2O = hydrogencarbonate + acetyl-CoA + NADH + H(+). It carries out the reaction 2-methyl-3-oxopropanoate + NAD(+) + CoA + H2O = propanoyl-CoA + hydrogencarbonate + NADH + H(+). The protein operates within polyol metabolism; myo-inositol degradation into acetyl-CoA; acetyl-CoA from myo-inositol: step 7/7. In terms of biological role, catalyzes the oxidation of malonate semialdehyde (MSA) and methylmalonate semialdehyde (MMSA) into acetyl-CoA and propanoyl-CoA, respectively. Is involved in a myo-inositol catabolic pathway. Bicarbonate, and not CO2, is the end-product of the enzymatic reaction. This Geobacillus kaustophilus (strain HTA426) protein is Malonate-semialdehyde dehydrogenase 1.